The chain runs to 375 residues: Putative type I specificity subunit S.MpnORF638P (375 aa).

This sequence belongs to the type-I restriction system S methylase family. The methyltransferase is composed of M and S polypeptides.

Functionally, the specificity (S) subunit of a type I methyltransferase (MTase); this subunit dictates DNA sequence specificity. The single R subunit has multiple frameshifts and is probably not expressed. The chain is Putative type I specificity subunit S.MpnORF638P from Mycoplasma pneumoniae (strain ATCC 29342 / M129 / Subtype 1) (Mycoplasmoides pneumoniae).